We begin with the raw amino-acid sequence, 136 residues long: Large ribosomal subunit protein uL16 (136 aa).

The protein belongs to the universal ribosomal protein uL16 family. As to quaternary structure, part of the 50S ribosomal subunit.

Its function is as follows. Binds 23S rRNA and is also seen to make contacts with the A and possibly P site tRNAs. In Rickettsia peacockii (strain Rustic), this protein is Large ribosomal subunit protein uL16.